The primary structure comprises 180 residues: ATP-dependent protease subunit HslV (180 aa).

The active site involves threonine 5. Glycine 161, cysteine 164, and threonine 167 together coordinate Na(+).

It belongs to the peptidase T1B family. HslV subfamily. As to quaternary structure, a double ring-shaped homohexamer of HslV is capped on each side by a ring-shaped HslU homohexamer. The assembly of the HslU/HslV complex is dependent on binding of ATP.

It localises to the cytoplasm. It catalyses the reaction ATP-dependent cleavage of peptide bonds with broad specificity.. Allosterically activated by HslU binding. Its function is as follows. Protease subunit of a proteasome-like degradation complex believed to be a general protein degrading machinery. In Campylobacter jejuni subsp. jejuni serotype O:6 (strain 81116 / NCTC 11828), this protein is ATP-dependent protease subunit HslV.